The chain runs to 186 residues: ATP synthase subunit delta, chloroplastic (186 aa).

This sequence belongs to the ATPase delta chain family. As to quaternary structure, F-type ATPases have 2 components, F(1) - the catalytic core - and F(0) - the membrane proton channel. F(1) has five subunits: alpha(3), beta(3), gamma(1), delta(1), epsilon(1). CF(0) has four main subunits: a(1), b(1), b'(1) and c(10-14). The alpha and beta chains form an alternating ring which encloses part of the gamma chain. F(1) is attached to F(0) by a central stalk formed by the gamma and epsilon chains, while a peripheral stalk is formed by the delta, b and b' chains.

The protein resides in the plastid. Its subcellular location is the chloroplast thylakoid membrane. In terms of biological role, f(1)F(0) ATP synthase produces ATP from ADP in the presence of a proton or sodium gradient. F-type ATPases consist of two structural domains, F(1) containing the extramembraneous catalytic core and F(0) containing the membrane proton channel, linked together by a central stalk and a peripheral stalk. During catalysis, ATP synthesis in the catalytic domain of F(1) is coupled via a rotary mechanism of the central stalk subunits to proton translocation. This protein is part of the stalk that links CF(0) to CF(1). It either transmits conformational changes from CF(0) to CF(1) or is implicated in proton conduction. This Porphyra purpurea (Red seaweed) protein is ATP synthase subunit delta, chloroplastic.